A 453-amino-acid chain; its full sequence is Bifunctional protein GlmU (453 aa).

Residues 1 to 227 are pyrophosphorylase; that stretch reads MTQDIVILAA…EAEVAGVNDR (227 aa). UDP-N-acetyl-alpha-D-glucosamine contacts are provided by residues 8–11, K22, Q73, 78–79, 100–102, G137, E152, N167, and N225; these read LAAG, GT, and YGD. Mg(2+) is bound at residue D102. Mg(2+) is bound at residue N225. The segment at 228-248 is linker; it reads VQLAALERELQNQQAVSLMQN. The N-acetyltransferase stretch occupies residues 249-453; the sequence is GATLLDPSRI…KDNWPRPIKK (205 aa). The UDP-N-acetyl-alpha-D-glucosamine site is built by R331 and K349. Catalysis depends on H361, which acts as the Proton acceptor. Positions 364 and 375 each coordinate UDP-N-acetyl-alpha-D-glucosamine. Residues A378, 384 to 385, S403, A421, and R438 contribute to the acetyl-CoA site; that span reads NY.

The protein in the N-terminal section; belongs to the N-acetylglucosamine-1-phosphate uridyltransferase family. It in the C-terminal section; belongs to the transferase hexapeptide repeat family. Homotrimer. It depends on Mg(2+) as a cofactor.

The protein resides in the cytoplasm. It catalyses the reaction alpha-D-glucosamine 1-phosphate + acetyl-CoA = N-acetyl-alpha-D-glucosamine 1-phosphate + CoA + H(+). The enzyme catalyses N-acetyl-alpha-D-glucosamine 1-phosphate + UTP + H(+) = UDP-N-acetyl-alpha-D-glucosamine + diphosphate. It participates in nucleotide-sugar biosynthesis; UDP-N-acetyl-alpha-D-glucosamine biosynthesis; N-acetyl-alpha-D-glucosamine 1-phosphate from alpha-D-glucosamine 6-phosphate (route II): step 2/2. It functions in the pathway nucleotide-sugar biosynthesis; UDP-N-acetyl-alpha-D-glucosamine biosynthesis; UDP-N-acetyl-alpha-D-glucosamine from N-acetyl-alpha-D-glucosamine 1-phosphate: step 1/1. The protein operates within bacterial outer membrane biogenesis; LPS lipid A biosynthesis. Functionally, catalyzes the last two sequential reactions in the de novo biosynthetic pathway for UDP-N-acetylglucosamine (UDP-GlcNAc). The C-terminal domain catalyzes the transfer of acetyl group from acetyl coenzyme A to glucosamine-1-phosphate (GlcN-1-P) to produce N-acetylglucosamine-1-phosphate (GlcNAc-1-P), which is converted into UDP-GlcNAc by the transfer of uridine 5-monophosphate (from uridine 5-triphosphate), a reaction catalyzed by the N-terminal domain. This chain is Bifunctional protein GlmU, found in Marinomonas sp. (strain MWYL1).